The chain runs to 394 residues: Elongation factor Tu (394 aa).

The 195-residue stretch at 10–204 (KPHINIGTIG…AVDDNIPTPE (195 aa)) folds into the tr-type G domain. The G1 stretch occupies residues 19–26 (GHVDHGKT). 19 to 26 (GHVDHGKT) contributes to the GTP binding site. Threonine 26 provides a ligand contact to Mg(2+). Positions 60–64 (GITIN) are G2. Residues 81-84 (DCPG) form a G3 region. GTP contacts are provided by residues 81–85 (DCPGH) and 136–139 (NKVD). The interval 136–139 (NKVD) is G4. The G5 stretch occupies residues 174 to 176 (SAL).

This sequence belongs to the TRAFAC class translation factor GTPase superfamily. Classic translation factor GTPase family. EF-Tu/EF-1A subfamily. In terms of assembly, monomer.

The protein localises to the cytoplasm. It catalyses the reaction GTP + H2O = GDP + phosphate + H(+). Functionally, GTP hydrolase that promotes the GTP-dependent binding of aminoacyl-tRNA to the A-site of ribosomes during protein biosynthesis. This Chlamydia pneumoniae (Chlamydophila pneumoniae) protein is Elongation factor Tu.